A 176-amino-acid polypeptide reads, in one-letter code: Large ribosomal subunit protein eL20 (176 aa).

This sequence belongs to the eukaryotic ribosomal protein eL20 family. Component of the large ribosomal subunit.

It localises to the cytoplasm. Component of the large ribosomal subunit. The ribosome is a large ribonucleoprotein complex responsible for the synthesis of proteins in the cell. This chain is Large ribosomal subunit protein eL20 (rpl18a), found in Salmo salar (Atlantic salmon).